The sequence spans 74 residues: Acyl carrier protein (74 aa).

One can recognise a Carrier domain in the interval 1-74; the sequence is MFEKVRKIIA…DVVEYIKNNS (74 aa). S34 bears the O-(pantetheine 4'-phosphoryl)serine mark.

This sequence belongs to the acyl carrier protein (ACP) family. Post-translationally, 4'-phosphopantetheine is transferred from CoA to a specific serine of apo-ACP by AcpS. This modification is essential for activity because fatty acids are bound in thioester linkage to the sulfhydryl of the prosthetic group.

The protein localises to the cytoplasm. It functions in the pathway lipid metabolism; fatty acid biosynthesis. Its function is as follows. Carrier of the growing fatty acid chain in fatty acid biosynthesis. In Acetivibrio thermocellus (strain ATCC 27405 / DSM 1237 / JCM 9322 / NBRC 103400 / NCIMB 10682 / NRRL B-4536 / VPI 7372) (Clostridium thermocellum), this protein is Acyl carrier protein.